We begin with the raw amino-acid sequence, 398 residues long: tRNA-specific 2-thiouridylase MnmA (398 aa).

ATP is bound by residues 18–25 (AMSGGVDS) and leucine 44. Cysteine 112 acts as the Nucleophile in catalysis. Cysteine 112 and cysteine 213 are joined by a disulfide. Glycine 136 provides a ligand contact to ATP. Residues 163 to 165 (RDQ) form an interaction with tRNA region. Cysteine 213 functions as the Cysteine persulfide intermediate in the catalytic mechanism.

Belongs to the MnmA/TRMU family.

The protein resides in the cytoplasm. It carries out the reaction S-sulfanyl-L-cysteinyl-[protein] + uridine(34) in tRNA + AH2 + ATP = 2-thiouridine(34) in tRNA + L-cysteinyl-[protein] + A + AMP + diphosphate + H(+). In terms of biological role, catalyzes the 2-thiolation of uridine at the wobble position (U34) of tRNA, leading to the formation of s(2)U34. In Rhizobium meliloti (strain 1021) (Ensifer meliloti), this protein is tRNA-specific 2-thiouridylase MnmA.